Here is a 441-residue protein sequence, read N- to C-terminus: Arginine biosynthesis bifunctional protein ArgJ, mitochondrial (441 aa).

The substrate site is built by T177, K204, T215, E301, N436, and S441. T215 (nucleophile) is an active-site residue.

It belongs to the ArgJ family. In terms of assembly, heterodimer of an alpha and a beta chain. The alpha and beta chains are autoproteolytically processed from a single precursor protein within the mitochondrion.

Its subcellular location is the mitochondrion matrix. It carries out the reaction N(2)-acetyl-L-ornithine + L-glutamate = N-acetyl-L-glutamate + L-ornithine. The catalysed reaction is L-glutamate + acetyl-CoA = N-acetyl-L-glutamate + CoA + H(+). It functions in the pathway amino-acid biosynthesis; L-arginine biosynthesis; L-ornithine and N-acetyl-L-glutamate from L-glutamate and N(2)-acetyl-L-ornithine (cyclic): step 1/1. The protein operates within amino-acid biosynthesis; L-arginine biosynthesis; N(2)-acetyl-L-ornithine from L-glutamate: step 1/4. Functionally, catalyzes two activities which are involved in the cyclic version of arginine biosynthesis: the synthesis of acetylglutamate from glutamate and acetyl-CoA, and of ornithine by transacetylation between acetylornithine and glutamate. In Candida glabrata (strain ATCC 2001 / BCRC 20586 / JCM 3761 / NBRC 0622 / NRRL Y-65 / CBS 138) (Yeast), this protein is Arginine biosynthesis bifunctional protein ArgJ, mitochondrial.